Consider the following 345-residue polypeptide: rRNA 2'-O-methyltransferase fibrillarin (345 aa).

The segment at methionine 1–isoleucine 114 is disordered. The span at proline 8–glycine 108 shows a compositional bias: gly residues. Asymmetric dimethylarginine occurs at positions 9, 23, 25, 41, 43, 49, 52, 59, 64, 72, 78, 84, 89, 94, and 99. S-adenosyl-L-methionine-binding positions include threonine 198 to threonine 199, glutamate 217 to phenylalanine 218, aspartate 242 to alanine 243, and aspartate 262 to glutamine 265.

This sequence belongs to the methyltransferase superfamily. Fibrillarin family. In terms of assembly, component of box C/D small nucleolar ribonucleoprotein (snoRNP) particles. It is associated with the U3, U8 and U13 small nuclear RNAs. Post-translationally, by homology to other fibrillarins, some or all of the N-terminal domain arginines are modified to asymmetric dimethylarginine (DMA).

The protein localises to the nucleus. Its subcellular location is the nucleolus. It catalyses the reaction L-glutaminyl-[histone H2A] + S-adenosyl-L-methionine = N(5)-methyl-L-glutaminyl-[histone H2A] + S-adenosyl-L-homocysteine + H(+). In terms of biological role, S-adenosyl-L-methionine-dependent methyltransferase that has the ability to methylate both RNAs and proteins. Involved in pre-rRNA processing. Utilizes the methyl donor S-adenosyl-L-methionine to catalyze the site-specific 2'-hydroxyl methylation of ribose moieties in pre-ribosomal RNA. Site specificity is provided by a guide RNA that base pairs with the substrate. Methylation occurs at a characteristic distance from the sequence involved in base pairing with the guide RNA. Also acts as a protein methyltransferase by mediating methylation of 'Gln-105' of histone H2A (H2AQ105me), a modification that impairs binding of the FACT complex and is specifically present at 35S ribosomal DNA locus. This Drosophila erecta (Fruit fly) protein is rRNA 2'-O-methyltransferase fibrillarin.